Here is a 94-residue protein sequence, read N- to C-terminus: FXYD domain-containing ion transport regulator 6 (94 aa).

The first 17 residues, M1 to A17, serve as a signal peptide directing secretion. Residues S18–Q34 are Extracellular-facing. A helical transmembrane segment spans residues T35–S57. Over R58–N94 the chain is Cytoplasmic.

This sequence belongs to the FXYD family. In terms of assembly, regulatory subunit of the sodium/potassium-transporting ATPase which is composed of a catalytic alpha subunit, a non-catalytic beta subunit and an additional regulatory subunit. The regulatory subunit, a member of the FXYD protein family, modulates the enzymatic activity in a tissue- and isoform-specific way by changing affinities of the Na+/K+-ATPase toward Na(+), K(+) or ATP. As to expression, expressed in the neuronal fibers of the medial part of lateral habenula nucleus, thalamus, hypothalamus, stria terminalis, zona incerta, amygdaloid body and cingulum, olfactory bulb, hippocampus, cerebral cortex and cerebellum. In the cerebellum there is a predominant expression pattern in the granule layer of lobules VI-IX of the posterior lobe. Detected in inner ear.

It is found in the cell membrane. Its function is as follows. Associates with and regulates the activity of the sodium/potassium-transporting ATPase (NKA) which catalyzes the hydrolysis of ATP coupled with the exchange of Na(+) and K(+) ions across the plasma membrane. Decreases the apparent affinity of the transporter for Na(+). In addition to modulating NKA kinetics, may also function as a regulator of NKA localization to the plasma membrane. The protein is FXYD domain-containing ion transport regulator 6 (Fxyd6) of Rattus norvegicus (Rat).